A 193-amino-acid chain; its full sequence is Imidazoleglycerol-phosphate dehydratase (193 aa).

Belongs to the imidazoleglycerol-phosphate dehydratase family.

The protein localises to the cytoplasm. It catalyses the reaction D-erythro-1-(imidazol-4-yl)glycerol 3-phosphate = 3-(imidazol-4-yl)-2-oxopropyl phosphate + H2O. It participates in amino-acid biosynthesis; L-histidine biosynthesis; L-histidine from 5-phospho-alpha-D-ribose 1-diphosphate: step 6/9. The chain is Imidazoleglycerol-phosphate dehydratase from Saccharolobus islandicus (strain Y.G.57.14 / Yellowstone #1) (Sulfolobus islandicus).